The chain runs to 500 residues: Glycerol kinase (500 aa).

Position 12 (Thr-12) interacts with ADP. ATP contacts are provided by Thr-12, Thr-13, and Ser-14. Thr-12 is a binding site for sn-glycerol 3-phosphate. Residue Arg-16 coordinates ADP. Sn-glycerol 3-phosphate is bound by residues Arg-82, Glu-83, Tyr-134, and Asp-246. Glycerol contacts are provided by Arg-82, Glu-83, Tyr-134, Asp-246, and Gln-247. ADP-binding residues include Thr-268 and Gly-312. The ATP site is built by Thr-268, Gly-312, Gln-316, and Gly-413. The ADP site is built by Gly-413 and Asn-417.

Belongs to the FGGY kinase family.

It catalyses the reaction glycerol + ATP = sn-glycerol 3-phosphate + ADP + H(+). It participates in polyol metabolism; glycerol degradation via glycerol kinase pathway; sn-glycerol 3-phosphate from glycerol: step 1/1. With respect to regulation, inhibited by fructose 1,6-bisphosphate (FBP). Its function is as follows. Key enzyme in the regulation of glycerol uptake and metabolism. Catalyzes the phosphorylation of glycerol to yield sn-glycerol 3-phosphate. The protein is Glycerol kinase of Saccharopolyspora erythraea (strain ATCC 11635 / DSM 40517 / JCM 4748 / NBRC 13426 / NCIMB 8594 / NRRL 2338).